The sequence spans 104 residues: Large ribosomal subunit protein uL24 (104 aa).

It belongs to the universal ribosomal protein uL24 family. As to quaternary structure, part of the 50S ribosomal subunit.

In terms of biological role, one of two assembly initiator proteins, it binds directly to the 5'-end of the 23S rRNA, where it nucleates assembly of the 50S subunit. One of the proteins that surrounds the polypeptide exit tunnel on the outside of the subunit. The sequence is that of Large ribosomal subunit protein uL24 from Halothermothrix orenii (strain H 168 / OCM 544 / DSM 9562).